We begin with the raw amino-acid sequence, 152 residues long: uncharacterized protein (152 aa).

Residues 127–152 form a disordered region; sequence EKEKAERKAEKAKKNKKKSSTKTKKK. Positions 136-152 are enriched in basic residues; it reads EKAKKNKKKSSTKTKKK.

It belongs to the mimivirus R546 family.

This is an uncharacterized protein from Sputnik virophage.